Here is a 551-residue protein sequence, read N- to C-terminus: CTP synthase (551 aa).

The segment at 1–265 is amidoligase domain; it reads MTRYLFITGG…DHIVAEKWGL (265 aa). Residue Ser-13 coordinates CTP. Ser-13 is a binding site for UTP. Residues 14 to 19 and Asp-71 contribute to the ATP site; that span reads SLGKGI. 2 residues coordinate Mg(2+): Asp-71 and Glu-139. Residues 146-148, 186-191, and Lys-222 contribute to the CTP site; these read DIE and KTKPTQ. UTP contacts are provided by residues 186–191 and Lys-222; that span reads KTKPTQ. Positions 290–541 constitute a Glutamine amidotransferase type-1 domain; sequence TVAMVGKYVD…LRAAIAHRDG (252 aa). Residue Gly-351 coordinates L-glutamine. The active-site Nucleophile; for glutamine hydrolysis is the Cys-378. Residues 379–382, Glu-402, and Arg-469 each bind L-glutamine; that span reads LGMQ. Catalysis depends on residues His-514 and Glu-516.

The protein belongs to the CTP synthase family. In terms of assembly, homotetramer.

It catalyses the reaction UTP + L-glutamine + ATP + H2O = CTP + L-glutamate + ADP + phosphate + 2 H(+). The enzyme catalyses L-glutamine + H2O = L-glutamate + NH4(+). The catalysed reaction is UTP + NH4(+) + ATP = CTP + ADP + phosphate + 2 H(+). The protein operates within pyrimidine metabolism; CTP biosynthesis via de novo pathway; CTP from UDP: step 2/2. With respect to regulation, allosterically activated by GTP, when glutamine is the substrate; GTP has no effect on the reaction when ammonia is the substrate. The allosteric effector GTP functions by stabilizing the protein conformation that binds the tetrahedral intermediate(s) formed during glutamine hydrolysis. Inhibited by the product CTP, via allosteric rather than competitive inhibition. In terms of biological role, catalyzes the ATP-dependent amination of UTP to CTP with either L-glutamine or ammonia as the source of nitrogen. Regulates intracellular CTP levels through interactions with the four ribonucleotide triphosphates. This chain is CTP synthase, found in Halorhodospira halophila (strain DSM 244 / SL1) (Ectothiorhodospira halophila (strain DSM 244 / SL1)).